The primary structure comprises 84 residues: Delta-conotoxin-like MVIA (84 aa).

Positions 1-22 are cleaved as a signal peptide; sequence MKLTCVMIVAVLFLTTWTFVTA. Positions 23–49 are excised as a propeptide; the sequence is DDSRYGLKNLFPKARHEMKNPEASKLN. 3 cysteine pairs are disulfide-bonded: cysteine 54/cysteine 69, cysteine 61/cysteine 73, and cysteine 68/cysteine 77. The residue at position 65 (proline 65) is a 4-hydroxyproline. The residue at position 83 (serine 83) is a Serine amide.

This sequence belongs to the conotoxin O1 superfamily. As to expression, expressed by the venom duct.

Its subcellular location is the secreted. Delta-conotoxins bind to site 6 of voltage-gated sodium channels (Nav) and inhibit the inactivation process. This is Delta-conotoxin-like MVIA from Conus magus (Magical cone).